We begin with the raw amino-acid sequence, 198 residues long: Imidazoleglycerol-phosphate dehydratase (198 aa).

The protein belongs to the imidazoleglycerol-phosphate dehydratase family.

Its subcellular location is the cytoplasm. The enzyme catalyses D-erythro-1-(imidazol-4-yl)glycerol 3-phosphate = 3-(imidazol-4-yl)-2-oxopropyl phosphate + H2O. The protein operates within amino-acid biosynthesis; L-histidine biosynthesis; L-histidine from 5-phospho-alpha-D-ribose 1-diphosphate: step 6/9. The chain is Imidazoleglycerol-phosphate dehydratase from Gluconobacter oxydans (strain 621H) (Gluconobacter suboxydans).